The primary structure comprises 367 residues: MKKSKIAAGVVVALAAVWCTSAWFTGKKAEEEYLYQLEQLNQLFTKTEALEESKIFYKNIKFERGLFASHIQDQIEIHKANETIIIPLSSTLYHGPLPLDRVAKLNFVPAIFSSQTLLGKNATTQAFFDITESEKPLQLNFAMNYSLSGNAELKLASGQYHNEQSKTDFDWSNVVLNIDLNQNTPNNYVLSVDTFNSNAPNHAVSTASSIKIKDLVVQGSLQSTKWPFIYSGNINSKIGYFEQNTESAESGEKFSLIQKNSQANLTTQVEGDTVNIINKTNLDELHINGNNLGKVTNNVEFNHIDGNALQELLNILVAIGKADSECLYLKHWCKNYNKQAWPLRIISLKLSLPLFLFLMKKAKWHWI.

Residues 6-26 (IAAGVVVALAAVWCTSAWFTG) traverse the membrane as a helical segment.

The protein to E.coli YdgA and YihF.

Its subcellular location is the membrane. This is an uncharacterized protein from Haemophilus influenzae (strain ATCC 51907 / DSM 11121 / KW20 / Rd).